The chain runs to 192 residues: MRDGEGIWGRGRTGGHAHPKEAMHTTFFILGGTMLIGVISDTHLYDRAFELPKAVFDEFSNVDLIIHCGDVTDKEILDSLKDLAKVVAVKGNMDYLNLPRKEILEINDIKIGVIHGDVVYPRGDRLKLRLLGKEMGVDVLISGHTHTPFIDDCRDILLLNPGSPTVPRCPLKSIMKLSVEDKLEAKLIPIEE.

A divalent metal cation contacts are provided by Asp41, His43, Asp70, Asn92, His115, His144, and His146.

This sequence belongs to the metallophosphoesterase superfamily. YfcE family. Requires a divalent metal cation as cofactor.

The sequence is that of Probable metallophosphoesterase MJ0623 from Methanocaldococcus jannaschii (strain ATCC 43067 / DSM 2661 / JAL-1 / JCM 10045 / NBRC 100440) (Methanococcus jannaschii).